Consider the following 372-residue polypeptide: Lipoyl synthase (372 aa).

The [4Fe-4S] cluster site is built by Cys37, Cys42, Cys48, Cys63, Cys67, Cys70, and Ser292. Residues 49-281 enclose the Radical SAM core domain; the sequence is WREGTATVML…ERAALEMGFL (233 aa). The disordered stretch occupies residues 338 to 372; it reads LTAELDPDEPRPPVAPAPASASPARLVPAASLIRR. The segment covering 354–372 has biased composition (low complexity); sequence APASASPARLVPAASLIRR.

It belongs to the radical SAM superfamily. Lipoyl synthase family. Requires [4Fe-4S] cluster as cofactor.

The protein localises to the cytoplasm. It catalyses the reaction [[Fe-S] cluster scaffold protein carrying a second [4Fe-4S](2+) cluster] + N(6)-octanoyl-L-lysyl-[protein] + 2 oxidized [2Fe-2S]-[ferredoxin] + 2 S-adenosyl-L-methionine + 4 H(+) = [[Fe-S] cluster scaffold protein] + N(6)-[(R)-dihydrolipoyl]-L-lysyl-[protein] + 4 Fe(3+) + 2 hydrogen sulfide + 2 5'-deoxyadenosine + 2 L-methionine + 2 reduced [2Fe-2S]-[ferredoxin]. Its pathway is protein modification; protein lipoylation via endogenous pathway; protein N(6)-(lipoyl)lysine from octanoyl-[acyl-carrier-protein]: step 2/2. In terms of biological role, catalyzes the radical-mediated insertion of two sulfur atoms into the C-6 and C-8 positions of the octanoyl moiety bound to the lipoyl domains of lipoate-dependent enzymes, thereby converting the octanoylated domains into lipoylated derivatives. The chain is Lipoyl synthase from Sorangium cellulosum (strain So ce56) (Polyangium cellulosum (strain So ce56)).